A 185-amino-acid chain; its full sequence is Protein LURP-one-related 13 (185 aa).

This sequence belongs to the LOR family.

In terms of biological role, might be related to the phospholipid scramblase and tubby-like superfamily of membrane tethered transcription factors. This is Protein LURP-one-related 13 from Arabidopsis thaliana (Mouse-ear cress).